A 617-amino-acid chain; its full sequence is Manganese lipoxygenase (617 aa).

The signal sequence occupies residues M1–A17. The segment covering G23 to T48 has biased composition (low complexity). Positions G23–P59 are disordered. N-linked (GlcNAc...) asparagine glycans are attached at residues N109, N119, and N160. The Lipoxygenase domain maps to L122–I617. The Mn(2+) site is built by H293, H297, H479, and N483. An N-linked (GlcNAc...) asparagine glycan is attached at N547. I617 serves as a coordination point for Mn(2+).

It belongs to the lipoxygenase family. Manganese lipoxygenase subfamily. Mn(2+) is required as a cofactor.

It localises to the secreted. It catalyses the reaction (9Z,12Z)-octadecadienoate + O2 = (9S)-hydroperoxy-(10E,12Z)-octadecadienoate. It carries out the reaction (9Z,12Z)-octadecadienoate + O2 = (11S)-hydroperoxy-(9Z,12Z)-octadecadienoate. The enzyme catalyses (9Z,12Z)-octadecadienoate + O2 = (13R)-hydroperoxy-(9Z,11E)-octadecadienoate. The catalysed reaction is (9Z,12Z,15Z)-octadecatrienoate + O2 = (9S)-hydroperoxy-(10E,12Z,15Z)-octadecatrienoate. It catalyses the reaction (9Z,12Z,15Z)-octadecatrienoate + O2 = (11R)-hydroperoxy-(9Z,12Z,15Z)-octadecatrienoate. It carries out the reaction (9Z,12Z,15Z)-octadecatrienoate + O2 = (13R)-hydroperoxy-(9Z,11E,15Z)-octadecatrienoate. Lipoxygenase that metabolizes linoleic and alpha-linolenic acids to 9S-, 11- and 13R-hydroperoxy fatty acids. At the end of lipoxygenation, the intermediate products 11S-HPODE and 13R-HPODE from linoleic acid are then transformed into 9S-HPODE as the final product. The intermediate product 11R-HPOTrE from alpha-linolenic acid is transformed into 9S-HPOTrE and 13R-HPOTrE as the final products. 9S-HPOTrE is further oxidized by the enzyme to 9,16-DiHOTrE as the end product. Also acts on gamma-linolenic acid producing 9-HOTrE(n-6) as the main metabolite. In Nakataea oryzae (Rice stem rot fungus), this protein is Manganese lipoxygenase.